Here is a 126-residue protein sequence, read N- to C-terminus: Adenosine 5'-monophosphoramidase HINT1 (126 aa).

Position 2 is an N-acetylalanine (A2). One can recognise an HIT domain in the interval 18–126 (IFGKIIRKEI…GGRQMHWPPG (109 aa)). An N6-acetyllysine mark is found at K21 and K30. 43-44 (DI) lines the AMP pocket. Phosphoserine is present on residues S45 and S72. AMP-binding positions include N99, 105–107 (GQS), and 112–114 (HLH). Positions 110 to 114 (HVHLH) match the Histidine triad motif motif. H112 functions as the Tele-AMP-histidine intermediate in the catalytic mechanism.

Belongs to the HINT family. In terms of assembly, homodimer. Interacts with CDK7. Interacts with RUVBL1 and RUVBL2 and is associated with the LEF1/TCF1-CTNNB1 complex and with a KAT5 histone acetyltransferase complex. Identified in a complex with MITF and CTNNB1. Interacts with CDC34 and RBX1, and is part of a SCF (SKP2-CUL1-F-box protein) E3 ubiquitin-protein ligase complex. Interacts with SUMO1, SUMO2 and RGS17. Interacts with the Ten-1 ICD form of TENM1. Interacts with CALM1; interaction increases in the presence of calcium ions.

The protein localises to the cytoplasm. It localises to the nucleus. The enzyme catalyses adenosine 5'-phosphoramidate + H2O = AMP + NH4(+). Exhibits adenosine 5'-monophosphoramidase activity, hydrolyzing purine nucleotide phosphoramidates with a single phosphate group such as adenosine 5'monophosphoramidate (AMP-NH2) to yield AMP and NH2. Hydrolyzes adenosine 5'monophosphomorpholidate (AMP-morpholidate) and guanosine 5'monophosphomorpholidate (GMP-morpholidate). Hydrolyzes lysyl-AMP (AMP-N-epsilon-(N-alpha-acetyl lysine methyl ester)) generated by lysine tRNA ligase, as well as Met-AMP, His-AMP and Asp-AMP, lysyl-GMP (GMP-N-epsilon-(N-alpha-acetyl lysine methyl ester)) and AMP-N-alanine methyl ester. Can also convert adenosine 5'-O-phosphorothioate and guanosine 5'-O-phosphorothioate to the corresponding nucleoside 5'-O-phosphates with concomitant release of hydrogen sulfide. In addition, functions as a scaffolding protein that modulates transcriptional activation by the LEF1/TCF1-CTNNB1 complex and by the complex formed with MITF and CTNNB1. Modulates p53/TP53 levels and p53/TP53-mediated apoptosis. Modulates proteasomal degradation of target proteins by the SCF (SKP2-CUL1-F-box protein) E3 ubiquitin-protein ligase complex. Also exhibits SUMO-specific isopeptidase activity, deconjugating SUMO1 from RANGAP1 and RGS17. This is Adenosine 5'-monophosphoramidase HINT1 (HINT1) from Pongo abelii (Sumatran orangutan).